Reading from the N-terminus, the 145-residue chain is D-aminoacyl-tRNA deacylase (145 aa).

Positions 137-138 (GP) match the Gly-cisPro motif, important for rejection of L-amino acids motif.

This sequence belongs to the DTD family. Homodimer.

The protein resides in the cytoplasm. The enzyme catalyses glycyl-tRNA(Ala) + H2O = tRNA(Ala) + glycine + H(+). The catalysed reaction is a D-aminoacyl-tRNA + H2O = a tRNA + a D-alpha-amino acid + H(+). In terms of biological role, an aminoacyl-tRNA editing enzyme that deacylates mischarged D-aminoacyl-tRNAs. Also deacylates mischarged glycyl-tRNA(Ala), protecting cells against glycine mischarging by AlaRS. Acts via tRNA-based rather than protein-based catalysis; rejects L-amino acids rather than detecting D-amino acids in the active site. By recycling D-aminoacyl-tRNA to D-amino acids and free tRNA molecules, this enzyme counteracts the toxicity associated with the formation of D-aminoacyl-tRNA entities in vivo and helps enforce protein L-homochirality. This chain is D-aminoacyl-tRNA deacylase, found in Shewanella amazonensis (strain ATCC BAA-1098 / SB2B).